The chain runs to 284 residues: MESFSELSLQFSQLSMFPFFETAHYLTSVMSAREQAGAVDVASRSPLASWFSSMLYCFGGGILSSILLAEPPVGILSNTTSIILASAVWYMVYYFPYDLFYNCFFFLPIRLILAGMKEVTRTWKILSGVAHAHSHYKDAMLVMITIGWARGAGGGLISNFEQLVRGVWKPESNEFLKMSYPVKVTLIGAVLFTLQHGQYLPISRHNLMFIYTLFLILIKVTMMLTRSTASPFLPLETSLQHILFSRQQIPAEVRESPSSSGDKGKPSKKTLDKDSGEQDNKKDN.

Residues 1–15 are Lumenal-facing; that stretch reads MESFSELSLQFSQLS. Residues 16 to 32 traverse the membrane as a helical segment; sequence MFPFFETAHYLTSVMSA. The Cytoplasmic portion of the chain corresponds to 33-44; the sequence is REQAGAVDVASR. Residues 45 to 68 form a helical membrane-spanning segment; the sequence is SPLASWFSSMLYCFGGGILSSILL. At 69–79 the chain is on the lumenal side; it reads AEPPVGILSNT. Residues 80 to 99 form a helical membrane-spanning segment; the sequence is TSIILASAVWYMVYYFPYDL. Over 100-102 the chain is Cytoplasmic; the sequence is FYN. A helical transmembrane segment spans residues 103 to 121; that stretch reads CFFFLPIRLILAGMKEVTR. A 1,2-diacyl-sn-glycero-3-phospho-(1D-myo-inositol-4,5-bisphosphate) contacts are provided by Lys-117 and Arg-121. The Lumenal segment spans residues 122-139; the sequence is TWKILSGVAHAHSHYKDA. A helical membrane pass occupies residues 140-157; that stretch reads MLVMITIGWARGAGGGLI. Over 158–178 the chain is Cytoplasmic; that stretch reads SNFEQLVRGVWKPESNEFLKM. A helical membrane pass occupies residues 179-196; it reads SYPVKVTLIGAVLFTLQH. Residues 197 to 204 are Lumenal-facing; sequence GQYLPISR. A helical membrane pass occupies residues 205–225; sequence HNLMFIYTLFLILIKVTMMLT. Over 226 to 284 the chain is Cytoplasmic; sequence RSTASPFLPLETSLQHILFSRQQIPAEVRESPSSSGDKGKPSKKTLDKDSGEQDNKKDN. Positions 250 to 284 are disordered; the sequence is PAEVRESPSSSGDKGKPSKKTLDKDSGEQDNKKDN. Positions 262-284 are enriched in basic and acidic residues; sequence DKGKPSKKTLDKDSGEQDNKKDN.

This sequence belongs to the TMEM38 family. In terms of assembly, homotrimer; conformation seems to be controled by binding to diacylglycerol (DAG).

Its subcellular location is the endoplasmic reticulum membrane. The enzyme catalyses K(+)(in) = K(+)(out). Its activity is regulated as follows. Channel activity is activated by increased cytosolic Ca(2+) levels and blocked by luminal high Ca(2+) levels. Functionally, intracellular monovalent cation channel required for maintenance of rapid intracellular calcium release. Acts as a potassium counter-ion channel that functions in synchronization with calcium release from intracellular stores. Activated by increased cytosolic Ca(2+) levels. The sequence is that of Trimeric intracellular cation channel type B (tmem38b) from Xenopus tropicalis (Western clawed frog).